We begin with the raw amino-acid sequence, 328 residues long: Tyrosine recombinase XerC (328 aa).

The 88-residue stretch at Gln13 to Ala100 folds into the Core-binding (CB) domain. The Tyr recombinase domain occupies Arg122–Asp319. Residues Arg162, Lys197, His271, Arg274, and His297 contribute to the active site. Tyr306 serves as the catalytic O-(3'-phospho-DNA)-tyrosine intermediate.

It belongs to the 'phage' integrase family. XerC subfamily. As to quaternary structure, forms a cyclic heterotetrameric complex composed of two molecules of XerC and two molecules of XerD.

It is found in the cytoplasm. Functionally, site-specific tyrosine recombinase, which acts by catalyzing the cutting and rejoining of the recombining DNA molecules. The XerC-XerD complex is essential to convert dimers of the bacterial chromosome into monomers to permit their segregation at cell division. It also contributes to the segregational stability of plasmids. The chain is Tyrosine recombinase XerC from Ralstonia pickettii (strain 12J).